The chain runs to 92 residues: Small ribosomal subunit protein uS19c (92 aa).

This sequence belongs to the universal ribosomal protein uS19 family.

It is found in the plastid. Its subcellular location is the chloroplast. Its function is as follows. Protein S19 forms a complex with S13 that binds strongly to the 16S ribosomal RNA. This is Small ribosomal subunit protein uS19c from Cycas taitungensis (Prince sago).